The sequence spans 324 residues: Probable non-intrinsic ABC protein 5 (324 aa).

The ABC transporter domain occupies 2–111; that stretch reads DRERYDKVIE…ADLTLVMKDG (110 aa). 2 helical membrane passes run 212–232 and 259–279; these read YITL…QILF and LSTL…CILV. The region spanning 222 to 324 is the ABC transmembrane type-1 domain; it reads VPFILLGQIL…TCSKTCIYSS (103 aa).

It belongs to the ABC transporter superfamily.

The protein resides in the membrane. The protein is Probable non-intrinsic ABC protein 5 (NAP5) of Arabidopsis thaliana (Mouse-ear cress).